Here is a 550-residue protein sequence, read N- to C-terminus: Chaperonin GroEL (550 aa).

ATP-binding positions include 30 to 33 (TLGP), K51, 87 to 91 (DGTTT), G415, and D495.

Belongs to the chaperonin (HSP60) family. In terms of assembly, forms a cylinder of 14 subunits composed of two heptameric rings stacked back-to-back. Interacts with the co-chaperonin GroES.

The protein resides in the cytoplasm. It carries out the reaction ATP + H2O + a folded polypeptide = ADP + phosphate + an unfolded polypeptide.. Together with its co-chaperonin GroES, plays an essential role in assisting protein folding. The GroEL-GroES system forms a nano-cage that allows encapsulation of the non-native substrate proteins and provides a physical environment optimized to promote and accelerate protein folding. This chain is Chaperonin GroEL, found in Shewanella piezotolerans (strain WP3 / JCM 13877).